We begin with the raw amino-acid sequence, 363 residues long: Type-2 angiotensin II receptor (363 aa).

Residues 1-45 (MKDNFSFAATSRNITSSLPFDNLNATGTNESAFNCSHKPADKHLE) lie on the Extracellular side of the membrane. Residues N4, N13, N24, N29, and N34 are each glycosylated (N-linked (GlcNAc...) asparagine). Intrachain disulfides connect C35–C290 and C117–C195. Residues 46–70 (AIPVLYYMIFVIGFAVNIVVVSLFC) form a helical membrane-spanning segment. Residues 71–80 (CQKGPKKVSS) lie on the Cytoplasmic side of the membrane. The chain crosses the membrane as a helical span at residues 81–104 (IYIFNLAVADLLLLATLPLWATYY). Residues Y103 and Y104 each contribute to the angiotensin II site. Residues 105 to 114 (SYRYDWLFGP) are Extracellular-facing. Residues 115–140 (VMCKVFGSFLTLNMFASIFFITCMSV) traverse the membrane as a helical segment. At 141 to 159 (DRYQSVIYPFLSQRRNPWQ) the chain is on the cytoplasmic side. The helical transmembrane segment at 160–181 (ASYVVPLVWCMACLSSLPTFYF) threads the bilayer. Residues R182, Y204, and K215 each contribute to the angiotensin II site. At 182-206 (RDVRTIEYLGVNACIMAFPPEKYAQ) the chain is on the extracellular side. The helical transmembrane segment at 207 to 232 (WSAGIALMKNILGFIIPLIFIATCYF) threads the bilayer. Residues 233–257 (GIRKHLLKTNSYGKNRITRDQVLKM) are Cytoplasmic-facing. Residues 258-281 (AAAVVLAFIICWLPFHVLTFLDAL) traverse the membrane as a helical segment. Angiotensin II is bound at residue D279. Residues 282 to 294 (TWMGIINSCEVIA) are Extracellular-facing. A helical transmembrane segment spans residues 295-320 (VIDLALPFAILLGFTNSCVNPFLYCF). Residue D297 participates in angiotensin II binding. The Cytoplasmic portion of the chain corresponds to 321 to 363 (VGNRFQQKLRSVFRVPITWLQGKRETMSCRKSSSLREMDTFVS). The tract at residues 324–333 (RFQQKLRSVF) is helix VIII. Phosphoserine; by PKC is present on S354.

The protein belongs to the G-protein coupled receptor 1 family. In terms of assembly, interacts with MTUS1. As to expression, abundant expression in fetal tissues, immature brain, skin wound and atretic ovarian follicles.

It is found in the cell membrane. Receptor for angiotensin II, a vasoconstricting peptide. Signals primarily via a non-canonical G-protein- and beta-arrestin independent pathways. Cooperates with MTUS1 to inhibit ERK2 activation and cell proliferation. The chain is Type-2 angiotensin II receptor from Rattus norvegicus (Rat).